We begin with the raw amino-acid sequence, 262 residues long: tRNA pseudouridine synthase A (262 aa).

Aspartate 51 (nucleophile) is an active-site residue. Tyrosine 109 contacts substrate.

Belongs to the tRNA pseudouridine synthase TruA family. Homodimer.

It catalyses the reaction uridine(38/39/40) in tRNA = pseudouridine(38/39/40) in tRNA. Formation of pseudouridine at positions 38, 39 and 40 in the anticodon stem and loop of transfer RNAs. This is tRNA pseudouridine synthase A from Legionella pneumophila (strain Paris).